The chain runs to 142 residues: Large ribosomal subunit protein bL17 (142 aa).

The protein belongs to the bacterial ribosomal protein bL17 family. In terms of assembly, part of the 50S ribosomal subunit. Contacts protein L32.

This is Large ribosomal subunit protein bL17 from Protochlamydia amoebophila (strain UWE25).